Here is a 172-residue protein sequence, read N- to C-terminus: Small ribosomal subunit protein uS5 (172 aa).

In terms of domain architecture, S5 DRBM spans 17–80; sequence LREKMISVNR…EQARRNMFKV (64 aa).

The protein belongs to the universal ribosomal protein uS5 family. Part of the 30S ribosomal subunit. Contacts proteins S4 and S8.

Its function is as follows. With S4 and S12 plays an important role in translational accuracy. Located at the back of the 30S subunit body where it stabilizes the conformation of the head with respect to the body. The sequence is that of Small ribosomal subunit protein uS5 from Burkholderia thailandensis (strain ATCC 700388 / DSM 13276 / CCUG 48851 / CIP 106301 / E264).